Here is a 392-residue protein sequence, read N- to C-terminus: tRNA (guanine-N(7)-)-methyltransferase (392 aa).

Residues E123, E148, and D175 each coordinate S-adenosyl-L-methionine. K201 and D231 together coordinate substrate.

Belongs to the class I-like SAM-binding methyltransferase superfamily. TrmB family.

The catalysed reaction is guanosine(46) in tRNA + S-adenosyl-L-methionine = N(7)-methylguanosine(46) in tRNA + S-adenosyl-L-homocysteine. The protein operates within tRNA modification; N(7)-methylguanine-tRNA biosynthesis. In terms of biological role, catalyzes the formation of N(7)-methylguanine at position 46 (m7G46) in tRNA. In Campylobacter jejuni subsp. doylei (strain ATCC BAA-1458 / RM4099 / 269.97), this protein is tRNA (guanine-N(7)-)-methyltransferase.